A 403-amino-acid chain; its full sequence is Accessory Sec system protein translocase subunit SecY2 (403 aa).

The next 10 membrane-spanning stretches (helical) occupy residues 17-37 (MLYTCFILFIYILGTNISIVS), 63-83 (LNIFTLGLGPWLTSMIILMLI), 105-125 (ILTLILSVIQSYFVIHEYVSK), 131-151 (DNIYLTILILVTGTMLLVWLA), 157-177 (YGIAGPMPIVMVSIIKSMMHQ), 186-206 (HIVIALLIILVIITLFILLFI), 240-260 (ITLMMSISAFVFLKSGIHFIL), 276-296 (FDSPVGISVYLVIQMLLGYFL), 339-359 (WFGLALVTVIIGIPLYFTLFV), and 366-386 (IYFSVQLIVLVYISINIAETI).

Belongs to the SecY/SEC61-alpha family. SecY2 subfamily. In terms of assembly, may form heterotrimers with SecE and SecG subunits (Potential). Component of the accessory SecA2/SecY2 protein translocase complex required to export cell wall protein SrpA.

The protein resides in the cell membrane. In terms of biological role, the central subunit of a protein translocation channel (Potential). Part of the accessory SecA2/SecY2 system specifically required to export SraP, a serine-rich repeat cell wall protein encoded upstream in the same operon. This is Accessory Sec system protein translocase subunit SecY2 from Staphylococcus aureus (strain NCTC 8325 / PS 47).